Reading from the N-terminus, the 357-residue chain is Thiamine thiazole synthase 3, chloroplastic (357 aa).

Residues 1 to 51 constitute a chloroplast transit peptide; sequence MSISAAGVATGLGANVELKSNVGSSSSSVAGVRLFTSRKAQLRRCAAPATS. Residues Ala103, 123-124, Gly131, and Ala196 each bind substrate; that span reads EQ. Cys225 is subject to 2,3-didehydroalanine (Cys). Substrate contacts are provided by residues Asp227, His242, Met294, and 304–306; that span reads RMG.

This sequence belongs to the THI4 family. In terms of assembly, homooctamer. Requires Fe cation as cofactor. During the catalytic reaction, a sulfide is transferred from Cys-225 to a reaction intermediate, generating a dehydroalanine residue.

It localises to the plastid. The protein localises to the chloroplast. The enzyme catalyses [ADP-thiazole synthase]-L-cysteine + glycine + NAD(+) = [ADP-thiazole synthase]-dehydroalanine + ADP-5-ethyl-4-methylthiazole-2-carboxylate + nicotinamide + 3 H2O + 2 H(+). Its function is as follows. Involved in biosynthesis of the thiamine precursor thiazole. Catalyzes the conversion of NAD and glycine to adenosine diphosphate 5-(2-hydroxyethyl)-4-methylthiazole-2-carboxylic acid (ADT), an adenylated thiazole intermediate. The reaction includes an iron-dependent sulfide transfer from a conserved cysteine residue of the protein to a thiazole intermediate. The enzyme can only undergo a single turnover, which suggests it is a suicide enzyme. May have additional roles in adaptation to various stress conditions and in DNA damage tolerance. The chain is Thiamine thiazole synthase 3, chloroplastic from Physcomitrium patens (Spreading-leaved earth moss).